The sequence spans 157 residues: Snaclec EMS16 subunit alpha (157 aa).

The signal sequence occupies residues Met1–Ala23. 3 disulfide bridges follow: Cys27–Cys38, Cys55–Cys152, and Cys127–Cys144. Positions Tyr34–Lys153 constitute a C-type lectin domain.

It belongs to the snaclec family. As to quaternary structure, heterodimer of subunits A and B; disulfide-linked. Expressed by the venom gland.

It is found in the secreted. Its function is as follows. EMS16 is a potent and selective inhibitor of alpha-2/beta-1 (ITGA2/ITGB1) integrin and acts as a potent antagonist of platelet aggregation and cell migration. Binds specifically to the I domain of the alpha-2 subunit, in a metal ion-independent fashion. The chain is Snaclec EMS16 subunit alpha from Echis multisquamatus (Central Asian sand viper).